The chain runs to 89 residues: Small ribosomal subunit protein uS14A (89 aa).

This sequence belongs to the universal ribosomal protein uS14 family. As to quaternary structure, part of the 30S ribosomal subunit. Contacts proteins S3 and S10.

In terms of biological role, binds 16S rRNA, required for the assembly of 30S particles and may also be responsible for determining the conformation of the 16S rRNA at the A site. In Ligilactobacillus salivarius (strain UCC118) (Lactobacillus salivarius), this protein is Small ribosomal subunit protein uS14A.